The primary structure comprises 1299 residues: Cilia- and flagella-associated protein 251 (1299 aa).

Residues 1-351 (MSDTEENPLE…SQKPEDILAQ (351 aa)) form a disordered region. Acidic residues-rich tracts occupy residues 17–45 (EMEEEKEEKKEEEEEEEEGEKEKEEEEEE), 91–162 (EKEE…EEDA), and 176–189 (ESQEDGEGLEEWVE). Basic and acidic residues predominate over residues 190–199 (KEEQREGEEV). The span at 212-228 (EEEGWEEEKSGEEEKSE) shows a compositional bias: acidic residues. Residues 229–257 (ESERSKERGGEEEGQEKEEAEHEGEREEG) are compositionally biased toward basic and acidic residues. The segment covering 269–280 (REEEEEEEDTET) has biased composition (acidic residues). Composition is skewed to basic and acidic residues over residues 281–297 (TETKAGRAKEEKKEKQN) and 331–351 (NSMKVDDTEEASQKPEDILAQ). 14 WD repeats span residues 484 to 526 (PVHT…IWKW), 534 to 574 (ACTL…CWFE), 585 to 624 (VLTEKTFNKLVGKFSQSVFHLKLPQVLSATKEGKLVVWDI), 643 to 678 (PRKLVHLQKEAITVLMTIDSYIVTGDIKGNIKFYDH), 681 to 741 (SVVN…VYHM), 745 to 785 (GTKL…VWDF), 791 to 828 (LFSRTFEKGLGVQCLTYNPEGALLGAGFTEGTVYILDA), 838 to 874 (PFKYSKSSVSHCCFSHDSNYMATADVNFTVAVYMVVV), 881 to 924 (WEYL…EYNL), 935 to 975 (LDVH…LFNA), 981 to 1027 (RKTL…ILPV), 1033 to 1071 (KTCAIVCHPNGVAGMALSYDGRFAFTAGGQDRSVVQWKI), 1109 to 1149 (YFYY…FYPS), and 1169 to 1209 (GKLI…GYTN).

The protein localises to the cytoplasm. The protein resides in the cytoskeleton. It localises to the cilium axoneme. It is found in the cell projection. Its subcellular location is the cilium. The protein localises to the flagellum. In terms of biological role, involved in spermatozoa motility. May also regulate cilium motility through its role in the assembly of the axonemal radial spokes. This chain is Cilia- and flagella-associated protein 251, found in Mus musculus (Mouse).